The primary structure comprises 117 residues: Large ribosomal subunit protein bL19 (117 aa).

Belongs to the bacterial ribosomal protein bL19 family.

Functionally, this protein is located at the 30S-50S ribosomal subunit interface and may play a role in the structure and function of the aminoacyl-tRNA binding site. This Mycoplasmopsis pulmonis (strain UAB CTIP) (Mycoplasma pulmonis) protein is Large ribosomal subunit protein bL19.